A 124-amino-acid chain; its full sequence is Small ribosomal subunit protein uS12 (124 aa).

D89 is subject to 3-methylthioaspartic acid.

It belongs to the universal ribosomal protein uS12 family. In terms of assembly, part of the 30S ribosomal subunit. Contacts proteins S8 and S17. May interact with IF1 in the 30S initiation complex.

With S4 and S5 plays an important role in translational accuracy. In terms of biological role, interacts with and stabilizes bases of the 16S rRNA that are involved in tRNA selection in the A site and with the mRNA backbone. Located at the interface of the 30S and 50S subunits, it traverses the body of the 30S subunit contacting proteins on the other side and probably holding the rRNA structure together. The combined cluster of proteins S8, S12 and S17 appears to hold together the shoulder and platform of the 30S subunit. In Sodalis glossinidius (strain morsitans), this protein is Small ribosomal subunit protein uS12.